The following is a 520-amino-acid chain: Glutamate decarboxylase-like protein FG08083 (520 aa).

86-88 (KLV) contributes to the substrate binding site. Lysine 300 carries the post-translational modification N6-(pyridoxal phosphate)lysine. The tract at residues 338–357 (KNGVSSEQSANTNGSEKESW) is disordered. The segment covering 340–351 (GVSSEQSANTNG) has biased composition (polar residues). Residue arginine 492 coordinates substrate.

The protein belongs to the group II decarboxylase family. The cofactor is pyridoxal 5'-phosphate.

It participates in mycotoxin biosynthesis. In terms of biological role, glutamate decarboxylase-like protein; part of the gene cluster that mediates the biosynthesis of butenolide, a mycotoxin that shows antibiotic activity but does not seem to play a major role in the spread of head blight in wheat. Butenolide is derived from glutamic acid via a 4-acetamido-2-butenoic acid intermediate. The predicted function of the NADH:flavin oxidoreductase FG08077, the cytochrome P450 monooxygenase FG08079, the decarboxylase FG08083, and the putative acetyltransferase FG08082 are consistent with this pathway, however, the respective activities of the butelonide biosynthesis cluster enzymes have still to be experimentally determined. The polypeptide is Glutamate decarboxylase-like protein FG08083 (Gibberella zeae (strain ATCC MYA-4620 / CBS 123657 / FGSC 9075 / NRRL 31084 / PH-1) (Wheat head blight fungus)).